Reading from the N-terminus, the 296-residue chain is Large ribosomal subunit protein uL15m (296 aa).

The transit peptide at 1-20 (MAASGGSGGKATELLRCLPR) directs the protein to the mitochondrion. Residues 25 to 66 (NLRPNPGARHREKRRGRGIHGGRKSGRGHKGETQRGNQPRLG) are disordered. Residues 32 to 52 (ARHREKRRGRGIHGGRKSGRG) show a composition bias toward basic residues.

This sequence belongs to the universal ribosomal protein uL15 family. As to quaternary structure, component of the mitochondrial ribosome large subunit (39S) which comprises a 16S rRNA and about 50 distinct proteins.

It is found in the mitochondrion. The polypeptide is Large ribosomal subunit protein uL15m (mrpl15) (Xenopus laevis (African clawed frog)).